Reading from the N-terminus, the 304-residue chain is Probable 5-dehydro-4-deoxyglucarate dehydratase (304 aa).

Belongs to the DapA family.

The enzyme catalyses 5-dehydro-4-deoxy-D-glucarate + H(+) = 2,5-dioxopentanoate + CO2 + H2O. It functions in the pathway carbohydrate acid metabolism; D-glucarate degradation; 2,5-dioxopentanoate from D-glucarate: step 2/2. The protein is Probable 5-dehydro-4-deoxyglucarate dehydratase of Rhodococcus jostii (strain RHA1).